The primary structure comprises 61 residues: Double gene block protein 1 (61 aa).

The interval 15–45 (LAGNRGKQKTRRSVAKDAIRKPASDSTNGGN) is disordered. Residues 17 to 35 (GNRGKQKTRRSVAKDAIRK) form an RNA-binding region. The span at 28 to 37 (VAKDAIRKPA) shows a compositional bias: basic and acidic residues.

The protein belongs to the carmovirus double gene block protein 1 family. Homodimer.

Functionally, cell-to-cell movement. Displays RNA-binding activity. The protein is Double gene block protein 1 of Carnation mottle virus (isolate China/Shanghai) (CarMV).